The primary structure comprises 448 residues: Protein ECM7 (448 aa).

Residues 1 to 28 are Cytoplasmic-facing; sequence MVMSRIRDTIARPFQNLTALEKVVQWLR. A helical membrane pass occupies residues 29-49; the sequence is LGTTLLIISFGLALTVGPLSS. Topologically, residues 50–204 are extracellular; the sequence is PRTLYMSRLD…MRSLKHKKAN (155 aa). The chain crosses the membrane as a helical span at residues 205–225; that stretch reads VLHLLYAVISFQVCMLFFMIW. Over 226–246 the chain is Cytoplasmic; that stretch reads YYYIKGRFMNALKERALVHIN. A helical membrane pass occupies residues 247–267; that stretch reads SLLSLVVFIGGLISSISLAWV. The Extracellular segment spans residues 268–287; it reads NYTIQSRINTELEAFGFSYH. Residues 288–308 traverse the membrane as a helical segment; the sequence is LGVTWFALLWCFAGLISVSCL. Residues 309-448 are Cytoplasmic-facing; that stretch reads AWSGLEWCIS…VIKPSSALQF (140 aa). Composition is skewed to polar residues over residues 351–363 and 383–406; these read YSQRYPQRQSTSG and VDLNSENDANTSLDHGNPTANISN. Disordered regions lie at residues 351-411 and 427-448; these read YSQR…GKHE and RSSNDSEESMQRVIKPSSALQF.

It localises to the membrane. Its function is as follows. May be involved in cell wall organization and biogenesis. This is Protein ECM7 (ECM7) from Saccharomyces cerevisiae (strain ATCC 204508 / S288c) (Baker's yeast).